The sequence spans 357 residues: 3-dehydroquinate synthase (357 aa).

NAD(+)-binding positions include 104–108, 128–129, Lys-141, and 168–171; these read GVVGD, TT, and FLET. Glu-183, His-243, and His-260 together coordinate Zn(2+).

It belongs to the sugar phosphate cyclases superfamily. Dehydroquinate synthase family. Requires NAD(+) as cofactor. Co(2+) is required as a cofactor. Zn(2+) serves as cofactor.

It is found in the cytoplasm. The enzyme catalyses 7-phospho-2-dehydro-3-deoxy-D-arabino-heptonate = 3-dehydroquinate + phosphate. It functions in the pathway metabolic intermediate biosynthesis; chorismate biosynthesis; chorismate from D-erythrose 4-phosphate and phosphoenolpyruvate: step 2/7. Its function is as follows. Catalyzes the conversion of 3-deoxy-D-arabino-heptulosonate 7-phosphate (DAHP) to dehydroquinate (DHQ). In Streptococcus pyogenes serotype M6 (strain ATCC BAA-946 / MGAS10394), this protein is 3-dehydroquinate synthase.